A 98-amino-acid chain; its full sequence is NADH-ubiquinone oxidoreductase chain 4L (98 aa).

Helical transmembrane passes span 1-21 (MTMV…GLLM), 29-49 (SLLC…VTIL), and 61-81 (IILL…LVMV).

Belongs to the complex I subunit 4L family. As to quaternary structure, core subunit of respiratory chain NADH dehydrogenase (Complex I) which is composed of 45 different subunits.

The protein resides in the mitochondrion inner membrane. It carries out the reaction a ubiquinone + NADH + 5 H(+)(in) = a ubiquinol + NAD(+) + 4 H(+)(out). Its function is as follows. Core subunit of the mitochondrial membrane respiratory chain NADH dehydrogenase (Complex I) which catalyzes electron transfer from NADH through the respiratory chain, using ubiquinone as an electron acceptor. Part of the enzyme membrane arm which is embedded in the lipid bilayer and involved in proton translocation. This Mirounga angustirostris (Northern elephant seal) protein is NADH-ubiquinone oxidoreductase chain 4L (MT-ND4L).